Consider the following 316-residue polypeptide: Protoheme IX farnesyltransferase (316 aa).

A run of 8 helical transmembrane segments spans residues 35 to 55 (VMVLVIFTALVGMVVSQGHVQ), 56 to 76 (PAIGAISLLAIAVGAGASGCL), 119 to 139 (VVLGLAANLLAAALLAFTIVF), 156 to 176 (IVIGGAAGALPPVIGQAVVTG), 183 to 203 (LILFAIIFIWTPPHFWALALI), 229 to 246 (IVWYSLLLAPLGLVPVAL), 250 to 272 (GLVYAVVGLVGGLGMVAFSIRVL), and 283 to 303 (AAMGMFGFSILYLFALFSALL).

Belongs to the UbiA prenyltransferase family. Protoheme IX farnesyltransferase subfamily.

The protein localises to the cell inner membrane. It catalyses the reaction heme b + (2E,6E)-farnesyl diphosphate + H2O = Fe(II)-heme o + diphosphate. The protein operates within porphyrin-containing compound metabolism; heme O biosynthesis; heme O from protoheme: step 1/1. In terms of biological role, converts heme B (protoheme IX) to heme O by substitution of the vinyl group on carbon 2 of heme B porphyrin ring with a hydroxyethyl farnesyl side group. In Methylobacterium radiotolerans (strain ATCC 27329 / DSM 1819 / JCM 2831 / NBRC 15690 / NCIMB 10815 / 0-1), this protein is Protoheme IX farnesyltransferase.